A 902-amino-acid polypeptide reads, in one-letter code: Protein translocase subunit SecA (902 aa).

Residues Gln87, 105 to 109, and Asp512 each bind ATP; that span reads GEGKT. The segment at 850-902 is disordered; that stretch reads RLAKQQQLSHEVTKESQMSAVDGQVASGKKVGRNEPCPCGSGKKYKHCHGKLG. A compositionally biased stretch (polar residues) spans 853–868; it reads KQQQLSHEVTKESQMS. Residues Cys886, Cys888, Cys897, and His898 each contribute to the Zn(2+) site. The span at 892-902 shows a compositional bias: basic residues; it reads KKYKHCHGKLG.

The protein belongs to the SecA family. In terms of assembly, monomer and homodimer. Part of the essential Sec protein translocation apparatus which comprises SecA, SecYEG and auxiliary proteins SecDF-YajC and YidC. Requires Zn(2+) as cofactor.

Its subcellular location is the cell inner membrane. The protein localises to the cytoplasm. It carries out the reaction ATP + H2O + cellular proteinSide 1 = ADP + phosphate + cellular proteinSide 2.. Functionally, part of the Sec protein translocase complex. Interacts with the SecYEG preprotein conducting channel. Has a central role in coupling the hydrolysis of ATP to the transfer of proteins into and across the cell membrane, serving both as a receptor for the preprotein-SecB complex and as an ATP-driven molecular motor driving the stepwise translocation of polypeptide chains across the membrane. In Proteus mirabilis (strain HI4320), this protein is Protein translocase subunit SecA.